Consider the following 378-residue polypeptide: Succinyl-diaminopimelate desuccinylase (378 aa).

H68 provides a ligand contact to Zn(2+). D70 is a catalytic residue. D101 is a binding site for Zn(2+). The Proton acceptor role is filled by E135. Zn(2+) is bound by residues E136, E164, and H350.

The protein belongs to the peptidase M20A family. DapE subfamily. In terms of assembly, homodimer. It depends on Zn(2+) as a cofactor. Co(2+) serves as cofactor.

It carries out the reaction N-succinyl-(2S,6S)-2,6-diaminopimelate + H2O = (2S,6S)-2,6-diaminopimelate + succinate. It participates in amino-acid biosynthesis; L-lysine biosynthesis via DAP pathway; LL-2,6-diaminopimelate from (S)-tetrahydrodipicolinate (succinylase route): step 3/3. In terms of biological role, catalyzes the hydrolysis of N-succinyl-L,L-diaminopimelic acid (SDAP), forming succinate and LL-2,6-diaminopimelate (DAP), an intermediate involved in the bacterial biosynthesis of lysine and meso-diaminopimelic acid, an essential component of bacterial cell walls. The chain is Succinyl-diaminopimelate desuccinylase from Vibrio campbellii (strain ATCC BAA-1116).